The following is a 103-amino-acid chain: Small ribosomal subunit protein uS14c (103 aa).

The segment at 34–56 (KVSPLSLSEKTKMREKLQSLPRN) is disordered.

This sequence belongs to the universal ribosomal protein uS14 family. As to quaternary structure, part of the 30S ribosomal subunit.

The protein resides in the plastid. It is found in the chloroplast. Its function is as follows. Binds 16S rRNA, required for the assembly of 30S particles. The sequence is that of Small ribosomal subunit protein uS14c from Triticum aestivum (Wheat).